The primary structure comprises 100 residues: NADH-quinone oxidoreductase subunit K 2 (100 aa).

3 helical membrane-spanning segments follow: residues 2–22 (LAIE…TIGV), 29–49 (IVIF…FIAF), and 61–81 (FVFF…ALMI).

This sequence belongs to the complex I subunit 4L family. In terms of assembly, NDH-1 is composed of 14 different subunits. Subunits NuoA, H, J, K, L, M, N constitute the membrane sector of the complex.

It is found in the cell inner membrane. It carries out the reaction a quinone + NADH + 5 H(+)(in) = a quinol + NAD(+) + 4 H(+)(out). Functionally, NDH-1 shuttles electrons from NADH, via FMN and iron-sulfur (Fe-S) centers, to quinones in the respiratory chain. The immediate electron acceptor for the enzyme in this species is believed to be ubiquinone. Couples the redox reaction to proton translocation (for every two electrons transferred, four hydrogen ions are translocated across the cytoplasmic membrane), and thus conserves the redox energy in a proton gradient. This chain is NADH-quinone oxidoreductase subunit K 2, found in Geobacter sp. (strain M21).